The chain runs to 198 residues: FMN-dependent NADH:quinone oxidoreductase 2 (198 aa).

Position 136 to 139 (136 to 139 (SRGG)) interacts with FMN.

This sequence belongs to the azoreductase type 1 family. In terms of assembly, homodimer. FMN is required as a cofactor.

It catalyses the reaction 2 a quinone + NADH + H(+) = 2 a 1,4-benzosemiquinone + NAD(+). The enzyme catalyses N,N-dimethyl-1,4-phenylenediamine + anthranilate + 2 NAD(+) = 2-(4-dimethylaminophenyl)diazenylbenzoate + 2 NADH + 2 H(+). Quinone reductase that provides resistance to thiol-specific stress caused by electrophilic quinones. Functionally, also exhibits azoreductase activity. Catalyzes the reductive cleavage of the azo bond in aromatic azo compounds to the corresponding amines. The polypeptide is FMN-dependent NADH:quinone oxidoreductase 2 (Clostridium perfringens (strain 13 / Type A)).